The following is a 172-amino-acid chain: MPRTQRNDNFIDKTFTVVADILLKVLPTSQREKQAFSYYRNGMSAQAEGEYAEALQNYYEAMRLEVDAYDRSYILYNIGLIHTSNGEHGRALEYYYQALERNPSLSSALNNIAVIYHYRGEQAIENGQSEISQILFEKAADYWKEAIRLAPTNYIEALNWLKMTGRLTGLAT.

3 TPR repeats span residues 35–68 (AFSY…EVDA), 72–105 (SYIL…NPSL), and 120–153 (GEQA…APTN).

Belongs to the Ycf3 family.

It is found in the plastid. The protein localises to the chloroplast thylakoid membrane. Essential for the assembly of the photosystem I (PSI) complex. May act as a chaperone-like factor to guide the assembly of the PSI subunits. The chain is Photosystem I assembly protein Ycf3 from Chlamydomonas reinhardtii (Chlamydomonas smithii).